Reading from the N-terminus, the 224-residue chain is Adenylate kinase (224 aa).

10–15 contributes to the ATP binding site; it reads GSGKST. Residues 30 to 59 are NMP; it reads SSGDLIRGEIERKSSLGLEMAAYLSRGDLI. AMP-binding positions include Ser-31, Arg-36, 57–59, 83–86, and Gln-90; these read DLI and GYPR. An LID region spans residues 124-161; that stretch reads GRRICPNCGAVYHITYNPPKVPGICDVCGTKLIQRTDD. Arg-125 is a binding site for ATP. 2 residues coordinate Zn(2+): Cys-128 and Cys-131. Residue 134-135 coordinates ATP; that stretch reads VY. 2 residues coordinate Zn(2+): Cys-148 and Cys-151. Residues Arg-158 and Arg-169 each contribute to the AMP site. Residue Gly-197 coordinates ATP.

This sequence belongs to the adenylate kinase family. As to quaternary structure, monomer.

It localises to the cytoplasm. The enzyme catalyses AMP + ATP = 2 ADP. It functions in the pathway purine metabolism; AMP biosynthesis via salvage pathway; AMP from ADP: step 1/1. In terms of biological role, catalyzes the reversible transfer of the terminal phosphate group between ATP and AMP. Plays an important role in cellular energy homeostasis and in adenine nucleotide metabolism. This chain is Adenylate kinase, found in Thermococcus gammatolerans (strain DSM 15229 / JCM 11827 / EJ3).